We begin with the raw amino-acid sequence, 102 residues long: Large ribosomal subunit protein bL21 (102 aa).

It belongs to the bacterial ribosomal protein bL21 family. In terms of assembly, part of the 50S ribosomal subunit. Contacts protein L20.

In terms of biological role, this protein binds to 23S rRNA in the presence of protein L20. The protein is Large ribosomal subunit protein bL21 of Onion yellows phytoplasma (strain OY-M).